The chain runs to 235 residues: Ferric nitrobindin-like protein (235 aa).

The segment at 1-59 (MSDLASEGSDPAERASEHSNGNAPADRPARRSGDQAVADAAERAKATGSRNIPVLPDLP) is disordered. The GXWXGXG signature appears at 85–91 (GVWRGEG).

Belongs to the nitrobindin family.

This Nocardia farcinica (strain IFM 10152) protein is Ferric nitrobindin-like protein.